The primary structure comprises 1346 residues: Cytokinesis protein sepH (1346 aa).

A disordered region spans residues 1–50 (MVSRSNEGPEAPHPASRTPGAPAKGRLTRLGSSPSKRDDKAKDDRMGKTS). The span at 35–50 (SKRDDKAKDDRMGKTS) shows a compositional bias: basic and acidic residues. The Protein kinase domain occupies 60–310 (YQLGDCLGRG…ARKLLKHPWI (251 aa)). ATP contacts are provided by residues 66 to 74 (LGRGAFGSV) and K89. The active-site Proton acceptor is D182. Disordered stretches follow at residues 342 to 380 (RSPESNALRRGTRNENQNPPSLRLDTRHTPTKVTLPSPV), 446 to 497 (DESF…HMRR), and 1211 to 1295 (LCKL…AGAS). 2 stretches are compositionally biased toward polar residues: residues 477–489 (QQANSGTSQSQNG) and 1220–1249 (RGSTSATSPGLLANQSAPVTPQLSRQNQSK).

The protein belongs to the protein kinase superfamily. Ser/Thr protein kinase family. CDC7 subfamily. It depends on Mg(2+) as a cofactor.

The catalysed reaction is L-seryl-[protein] + ATP = O-phospho-L-seryl-[protein] + ADP + H(+). It carries out the reaction L-threonyl-[protein] + ATP = O-phospho-L-threonyl-[protein] + ADP + H(+). In terms of biological role, required for early events during cytokinesis including localization of cytoskeletal components to the cytokinetic ring. In Emericella nidulans (strain FGSC A4 / ATCC 38163 / CBS 112.46 / NRRL 194 / M139) (Aspergillus nidulans), this protein is Cytokinesis protein sepH.